A 355-amino-acid polypeptide reads, in one-letter code: uncharacterized protein (355 aa).

Disordered stretches follow at residues 1-121, 226-253, and 336-355; these read MPID…MELR, RLMN…KSSM, and NLHR…RKRT. Residues 24 to 37 are compositionally biased toward acidic residues; sequence LESESSSESDYEEV. Over residues 65–87 the composition is skewed to polar residues; it reads ETKTSSNFQNINPVQTIDNSASE. A compositionally biased stretch (low complexity) spans 91 to 105; sequence DASSAEGGSNSAASS. The segment covering 106 to 117 has biased composition (acidic residues); the sequence is SEEEDSSDSEYE. Basic and acidic residues predominate over residues 226 to 245; the sequence is RLMNSEEREAQDLKDAEASR.

This is an uncharacterized protein from Schizosaccharomyces pombe (strain 972 / ATCC 24843) (Fission yeast).